The following is a 338-amino-acid chain: Ferredoxin--NADP reductase (338 aa).

D38, Q46, Y51, V91, F125, D291, and T331 together coordinate FAD.

It belongs to the ferredoxin--NADP reductase type 2 family. As to quaternary structure, homodimer. The cofactor is FAD.

The catalysed reaction is 2 reduced [2Fe-2S]-[ferredoxin] + NADP(+) + H(+) = 2 oxidized [2Fe-2S]-[ferredoxin] + NADPH. The chain is Ferredoxin--NADP reductase from Orientia tsutsugamushi (strain Boryong) (Rickettsia tsutsugamushi).